Reading from the N-terminus, the 143-residue chain is MDFIILLIAILALSSTPITIISGSVTNHTYSTTNSYTNVALSARKVVFPPPRQLGKDNSDDDDLICKTCKRLSEHRTCCFNYFCVDLFTNRFNCGSCGLVCIVGTRCCGGICVDIKKDNGNCGKCNNVCSPGQNCSFGLCVSA.

Positions 1-23 are cleaved as a signal peptide; the sequence is MDFIILLIAILALSSTPITIISG. Residues 76-87 form a sufficient for PI(4)P binding region; the sequence is RTCCFNYFCVDL. Positions 80-83 are sufficient for binding to the extracellular domain of PRK2; the sequence is FNYF. Residues 88-115 are sufficient for PI(3)P binding; it reads FTNRFNCGSCGLVCIVGTRCCGGICVDI.

This sequence belongs to the STIG1 family. In terms of assembly, interacts with PRK1 and PRK2 (via extracellular domain). As to expression, expressed in the stigma and the upper section of the style.

The protein localises to the secreted. The protein resides in the extracellular space. It localises to the apoplast. Functionally, promotes pollen tube growth. A C-terminal peptide is cleaved from the propeptide in the stigmatic exudate and represent the major form of STIG1. Binds phosphoinositol lipids. The binding of external phosphatidylinositol 3-phosphate (PI(3)P) and PRK2 by STIG1 induces a rapid intracellular reactive oxygen species elevation. The sequence is that of Protein STIG1 from Solanum lycopersicum (Tomato).